The chain runs to 465 residues: MSFLVAIVGRANVGKSTLFNVLTNSYDALVFDFEGVTRDRQYGQAKYDDLDYLVVDTGGISDKDVGFDEFMAKQSQIAIDEANLVFFVVDGRSGLTTGDEYVASLLRQKDKKVVVVVNKVDGTDEEAAMAEFYSFGFDKVFAISAAHRRNTQKLVDKFLKKTLNEYYQDYTQTQEHKEQQRHGIHFSLIGRPNVGKSTLTNRMLGEDRVVVFDMPGTTIDSVSIPFERHGQKYTIVDTAGVRKRGKVKQTLEKFSVIKTLQAIQDSNVVVAVVDARQGISDQDLSLIHFAIKNGRALVLAVNKWDGMTEEDRIQVKQDLKRKLFFLQDYVDIHFISALHGTNVGHVFESIDTAYACASKKITTADATRLMQLAVEAHSPPMVGKFRIKLKYAHVGGHNPPVIVIHGNQVSRLPNSYKRYLENFFREALDFRGTPIVFEFKQSENPFADRKNKRSKDEGSKSKKVK.

EngA-type G domains lie at 3–166 (FLVA…LNEY) and 184–358 (IHFS…ACAS). Residues 9–16 (GRANVGKS), 56–60 (DTGGI), 118–121 (NKVD), 190–197 (GRPNVGKS), 237–241 (DTAGV), and 302–305 (NKWD) each bind GTP. Residues 359-443 (KKITTADATR…PIVFEFKQSE (85 aa)) form the KH-like domain. A disordered region spans residues 446 to 465 (FADRKNKRSKDEGSKSKKVK).

Belongs to the TRAFAC class TrmE-Era-EngA-EngB-Septin-like GTPase superfamily. EngA (Der) GTPase family. In terms of assembly, associates with the 50S ribosomal subunit.

GTPase that plays an essential role in the late steps of ribosome biogenesis. This is GTPase Der from Francisella tularensis subsp. tularensis (strain FSC 198).